Here is a 234-residue protein sequence, read N- to C-terminus: Sugar fermentation stimulation protein homolog (234 aa).

Belongs to the SfsA family.

The sequence is that of Sugar fermentation stimulation protein homolog from Idiomarina loihiensis (strain ATCC BAA-735 / DSM 15497 / L2-TR).